The chain runs to 605 residues: Class II receptor tyrosine kinase (605 aa).

An Ig-like C2-type domain is found at 1 to 67 (MWSSPGRNLE…DGESASFRVD (67 aa)). The Extracellular segment spans residues 1 to 84 (MWSSPGRNLE…GSNSGVIAGV (84 aa)). N-linked (GlcNAc...) asparagine glycans are attached at residues Asn-26, Asn-44, and Asn-72. Residues 85–105 (LITLLLLIALIIILICVFWVV) form a helical membrane-spanning segment. Topologically, residues 106–605 (WRYRRRGKFD…GRPRGVAGCV (500 aa)) are cytoplasmic. The interval 209 to 230 (EELSPIQEKPTRRNTGLSTYSQ) is disordered. Positions 221 to 230 (RNTGLSTYSQ) are enriched in polar residues. Positions 346 to 605 (IREVKQIGVG…GRPRGVAGCV (260 aa)) constitute a Protein kinase domain. ATP-binding positions include 352-360 (IGVGQFGAV) and Lys-393. Asp-496 serves as the catalytic Proton acceptor. Tyr-527 bears the Phosphotyrosine; by autocatalysis mark.

Belongs to the protein kinase superfamily. Tyr protein kinase family. Insulin receptor subfamily. Phosphorylated.

It is found in the cell membrane. The enzyme catalyses L-tyrosyl-[protein] + ATP = O-phospho-L-tyrosyl-[protein] + ADP + H(+). The sequence is that of Class II receptor tyrosine kinase (TK) from Geodia cydonium (Sponge).